Here is an 814-residue protein sequence, read N- to C-terminus: DNA ligase (814 aa).

NAD(+) contacts are provided by residues 46–50 (DAEYD), 95–96 (SL), and E129. K131 serves as the catalytic N6-AMP-lysine intermediate. Residues R152, E189, K305, and K329 each contribute to the NAD(+) site. Residues C434, C437, C458, and C464 each coordinate Zn(2+). The tract at residues 525 to 548 (LSAQRRSEGEPAPKKPTKKKGEEE) is disordered. In terms of domain architecture, BRCT spans 735–814 (TSAAAFAGKT…DDWLAMLAEA (80 aa)).

The protein belongs to the NAD-dependent DNA ligase family. LigA subfamily. Requires Mg(2+) as cofactor. Mn(2+) is required as a cofactor.

It catalyses the reaction NAD(+) + (deoxyribonucleotide)n-3'-hydroxyl + 5'-phospho-(deoxyribonucleotide)m = (deoxyribonucleotide)n+m + AMP + beta-nicotinamide D-nucleotide.. Functionally, DNA ligase that catalyzes the formation of phosphodiester linkages between 5'-phosphoryl and 3'-hydroxyl groups in double-stranded DNA using NAD as a coenzyme and as the energy source for the reaction. It is essential for DNA replication and repair of damaged DNA. The polypeptide is DNA ligase (Methylorubrum extorquens (strain PA1) (Methylobacterium extorquens)).